The chain runs to 146 residues: uncharacterized protein (146 aa).

A helical membrane pass occupies residues 7–24; that stretch reads VIALFLVTGLTLYAIRLL.

It is found in the membrane. This is an uncharacterized protein from Haemophilus influenzae (strain ATCC 51907 / DSM 11121 / KW20 / Rd).